The sequence spans 315 residues: Phosphate transport system permease protein PstC (315 aa).

The Cytoplasmic portion of the chain corresponds to 1-22 (MLTKSRKYFNQTWIESLFKQTT). Residues 23 to 43 (ALFALLVFILLAAILISLVIG) form a helical membrane-spanning segment. At 44–77 (SWESIKRFGGSFLLETYWDPVQEQYGAIIPILGT) the chain is on the periplasmic side. Residues 74-302 (ILGTLITAGI…VITTMVLILS (229 aa)) form the ABC transmembrane type-1 domain. Residues 78 to 98 (LITAGIALFIAVPISFGIAIF) form a helical membrane-spanning segment. Over 99–117 (LTELAPNWLKRPISIAIEM) the chain is Cytoplasmic. Residues 118–138 (LAAIPSIIYGMWGLFVFVPLF) form a helical membrane-spanning segment. The Periplasmic portion of the chain corresponds to 139-164 (QEHIQPVLIDNLGNLPGLELFFSGVP). A helical transmembrane segment spans residues 165-185 (FGVGLFTAGLVLAIMIIPFIA). The Cytoplasmic segment spans residues 186–223 (SVMRDVFSIVPPMLKEGAYGLGATTWEVVRQVIVPHTR). The helical transmembrane segment at 224-244 (IGLVGSVMLGLGRALGETMAI) threads the bilayer. Topologically, residues 245–281 (TFIIGNSFQLPNSLFSPSTSIASAIANEFNEAGGLQK) are periplasmic. Residues 282–302 (SALMELGLLLFVITTMVLILS) form a helical membrane-spanning segment. At 303–315 (RLMITKMQQTKGK) the chain is on the cytoplasmic side.

It belongs to the binding-protein-dependent transport system permease family. CysTW subfamily.

The protein resides in the cell inner membrane. Part of the binding-protein-dependent transport system for phosphate; probably responsible for the translocation of the substrate across the membrane. The chain is Phosphate transport system permease protein PstC (pstC) from Haemophilus influenzae (strain ATCC 51907 / DSM 11121 / KW20 / Rd).